Here is a 193-residue protein sequence, read N- to C-terminus: D-alanyl-D-alanine dipeptidase (193 aa).

Histidine 98 and aspartate 105 together coordinate Zn(2+). The active-site Proton donor/acceptor is the glutamate 162. Residue histidine 165 participates in Zn(2+) binding.

Belongs to the peptidase M15D family. Zn(2+) serves as cofactor.

The protein localises to the cytoplasm. The catalysed reaction is D-alanyl-D-alanine + H2O = 2 D-alanine. In terms of biological role, catalyzes hydrolysis of the D-alanyl-D-alanine dipeptide. May have a role in cell-wall turnover. The polypeptide is D-alanyl-D-alanine dipeptidase (Escherichia coli (strain K12)).